Consider the following 224-residue polypeptide: Ribonuclease 3 (224 aa).

Residues 5–127 (LERLCRRLNY…ILAAIYLDGG (123 aa)) enclose the RNase III domain. Position 40 (Glu-40) interacts with Mg(2+). Residue Asp-44 is part of the active site. The Mg(2+) site is built by Asp-113 and Glu-116. The active site involves Glu-116. One can recognise a DRBM domain in the interval 154 to 224 (DAKTQLQEFL…AKAMLEQLQG (71 aa)).

It belongs to the ribonuclease III family. As to quaternary structure, homodimer. The cofactor is Mg(2+).

The protein localises to the cytoplasm. The catalysed reaction is Endonucleolytic cleavage to 5'-phosphomonoester.. In terms of biological role, digests double-stranded RNA. Involved in the processing of primary rRNA transcript to yield the immediate precursors to the large and small rRNAs (23S and 16S). Processes some mRNAs, and tRNAs when they are encoded in the rRNA operon. Processes pre-crRNA and tracrRNA of type II CRISPR loci if present in the organism. This Legionella pneumophila (strain Lens) protein is Ribonuclease 3.